The sequence spans 440 residues: Xylose isomerase (440 aa).

Active-site residues include His101 and Asp104. Glu232, Glu268, His271, Asp296, Asp307, Asp309, and Asp339 together coordinate Mg(2+).

Belongs to the xylose isomerase family. Homotetramer. It depends on Mg(2+) as a cofactor.

It is found in the cytoplasm. It catalyses the reaction alpha-D-xylose = alpha-D-xylulofuranose. The chain is Xylose isomerase from Salmonella typhi.